A 1402-amino-acid chain; its full sequence is Erbin (1402 aa).

LRR repeat units lie at residues 23 to 44 (TVTT…IFTF), 47 to 68 (TLEE…LFNC), 70 to 91 (SLHK…IANL), 93 to 114 (NLRE…IKNC), 116 to 137 (VLTI…FSQL), 139 to 161 (NLTQ…GRLT), 162 to 183 (KLQI…MNRL), 185 to 206 (QLER…LEQL), 208 to 229 (GLRE…IGSL), 231 to 252 (QLTY…ISTC), 254 to 275 (NLQD…IGSL), 277 to 298 (NVTT…IGGL), 300 to 321 (SIEE…IGQL), 323 to 344 (NMRT…IGNW), 346 to 367 (NITV…MGDM), 369 to 391 (KLKV…TKLQ), and 392 to 413 (QLTA…QKET). Residues Ser440 and Ser444 each carry the phosphoserine modification. Disordered stretches follow at residues 465–489 (DEDK…PYPD) and 507–543 (DEET…TTKS). Positions 470-480 (EREAPPREGNL) are enriched in basic and acidic residues. Tyr483 is subject to Phosphotyrosine. Thr485 is modified (phosphothreonine). The segment covering 507–534 (DEETNEESGRDLKQHEDQQVVNKDKCVK) has biased composition (basic and acidic residues). A phosphoserine mark is found at Ser595, Ser599, Ser600, and Ser617. Positions 629–638 (NKKDDAKDAD) are enriched in basic and acidic residues. A disordered region spans residues 629 to 694 (NKKDDAKDAD…PVDSNSKVRQ (66 aa)). The segment covering 647-659 (NSNQNNSNCSSPS) has biased composition (low complexity). Residues 660 to 689 (RMSDSVSLNTDSSQDTSLCSPVKQTPVDSN) show a composition bias toward polar residues. Residues Ser712, Ser849, Ser854, and Ser869 each carry the phosphoserine modification. The disordered stretch occupies residues 824-864 (EDTAPSPGRVEPQKASSSADVGISKSTEDLSPQRSGPTGAV). Position 914 is a phosphothreonine (Thr914). A Phosphotyrosine modification is found at Tyr917. Ser928 bears the Phosphoserine mark. At Tyr970 the chain carries Phosphotyrosine. Disordered stretches follow at residues 990–1018 (WHPK…ENHS) and 1070–1093 (TTIQ…TRRT). Residues 1070-1084 (TTIQRQSSVSSTASV) are compositionally biased toward polar residues. Residue Tyr1097 is modified to Phosphotyrosine. 3 disordered regions span residues 1107–1187 (GRTP…VPHD), 1198–1217 (AKKL…CQDD), and 1222–1274 (EEQN…VARH). 2 stretches are compositionally biased toward polar residues: residues 1128 to 1139 (GPNTSRPQSARP) and 1149 to 1164 (MSVS…PSKR). A phosphoserine mark is found at Ser1150 and Ser1171. Residues Leu1231, Arg1234, and Ser1276 each carry the phosphoserine modification. Residues 1311–1400 (EIRVRVEKDP…AVDLIIVREV (90 aa)) form the PDZ domain.

Belongs to the LAP (LRR and PDZ) protein family. As to quaternary structure, interacts with ERBB2, BPAG1 and ITGB4. May favor the localization of ERBB2, by restricting its presence to the basolateral membrane of epithelial cells. Also found to interact with ARVCF and delta catenin. Interacts (via C-terminus) with DST (via N-terminus). Interacts with NOD2 (via CARD domain). Post-translationally, isoform 2 is phosphorylated on Ser-1231 and Ser-1234.

Its subcellular location is the cell junction. The protein localises to the hemidesmosome. It localises to the nucleus membrane. It is found in the basolateral cell membrane. Acts as an adapter for the receptor ERBB2, in epithelia. By binding the unphosphorylated ERBB2 'Tyr-1248' receptor, it may contribute to stabilize this unphosphorylated state. Inhibits NOD2-dependent NF-kappa-B signaling and pro-inflammatory cytokine secretion. This Mus musculus (Mouse) protein is Erbin.